Consider the following 349-residue polypeptide: GTPase Obg (349 aa).

The Obg domain occupies 1–159 (MKFLDEAKVY…RWIWLRLKLI (159 aa)). The region spanning 160 to 327 (ADAGLVGLPN…ALRALVEVIG (168 aa)) is the OBG-type G domain. Residues 166 to 173 (GLPNAGKS), 191 to 195 (FTTLH), 212 to 215 (DIPG), 279 to 282 (NKID), and 308 to 310 (SGV) contribute to the GTP site. Ser-173 and Thr-193 together coordinate Mg(2+).

Belongs to the TRAFAC class OBG-HflX-like GTPase superfamily. OBG GTPase family. In terms of assembly, monomer. Requires Mg(2+) as cofactor.

The protein localises to the cytoplasm. Functionally, an essential GTPase which binds GTP, GDP and possibly (p)ppGpp with moderate affinity, with high nucleotide exchange rates and a fairly low GTP hydrolysis rate. Plays a role in control of the cell cycle, stress response, ribosome biogenesis and in those bacteria that undergo differentiation, in morphogenesis control. The protein is GTPase Obg of Rhodopseudomonas palustris (strain BisB18).